The sequence spans 122 residues: MPATAYERVVYKSPSEYHYMKVCLEFQEHGVGLNVAQFKQLLVSALRDLFGEVGAALPVDVLTYDEKTLSAILRICSSGLVKLWSSLTLFGAYKSKKCAFRVIQVSPFLLALSGNSREQVLD.

Belongs to the eukaryotic/archaeal RNase P protein component 2 family. As to quaternary structure, RNase P consists of a catalytic RNA moiety and about 10 protein subunits; POP1, POP4, POP5, POP7, RPP14, RPP21, RPP25, RPP30, RPP38 and RPP40. Within the RNase P complex, POP1, POP7 and RPP25 form the 'finger' subcomplex, POP5, RPP14, RPP40 and homodimeric RPP30 form the 'palm' subcomplex, and RPP21, POP4 and RPP38 form the 'wrist' subcomplex. All subunits of the RNase P complex interact with the catalytic RNA.

The protein localises to the nucleus. It localises to the nucleolus. Its function is as follows. Component of ribonuclease P, a ribonucleoprotein complex that generates mature tRNA molecules by cleaving their 5'-ends. This chain is Ribonuclease P protein subunit p14 (Rpp14), found in Mus musculus (Mouse).